The sequence spans 229 residues: Orotidine 5'-phosphate decarboxylase (229 aa).

Residues aspartate 12, lysine 34, 61–70 (DWKLHDIGAT), threonine 116, arginine 177, glutamine 186, glycine 206, and arginine 207 each bind substrate. Lysine 63 (proton donor) is an active-site residue.

It belongs to the OMP decarboxylase family. Type 1 subfamily. As to quaternary structure, homodimer.

The enzyme catalyses orotidine 5'-phosphate + H(+) = UMP + CO2. Its pathway is pyrimidine metabolism; UMP biosynthesis via de novo pathway; UMP from orotate: step 2/2. Functionally, catalyzes the decarboxylation of orotidine 5'-monophosphate (OMP) to uridine 5'-monophosphate (UMP). This Caulobacter sp. (strain K31) protein is Orotidine 5'-phosphate decarboxylase.